Reading from the N-terminus, the 431-residue chain is Enolase (431 aa).

Residue Q167 coordinates (2R)-2-phosphoglycerate. The active-site Proton donor is the E209. Residues D246, E287, and D314 each contribute to the Mg(2+) site. 4 residues coordinate (2R)-2-phosphoglycerate: K339, R368, S369, and K390. The active-site Proton acceptor is K339.

Belongs to the enolase family. It depends on Mg(2+) as a cofactor.

Its subcellular location is the cytoplasm. It localises to the secreted. The protein resides in the cell surface. It catalyses the reaction (2R)-2-phosphoglycerate = phosphoenolpyruvate + H2O. It participates in carbohydrate degradation; glycolysis; pyruvate from D-glyceraldehyde 3-phosphate: step 4/5. Catalyzes the reversible conversion of 2-phosphoglycerate (2-PG) into phosphoenolpyruvate (PEP). It is essential for the degradation of carbohydrates via glycolysis. This is Enolase from Prochlorococcus marinus (strain MIT 9303).